The chain runs to 567 residues: Arginine--tRNA ligase (567 aa).

The 'HIGH' region motif lies at 128–138 (ANPTGPLHVGH).

Belongs to the class-I aminoacyl-tRNA synthetase family. As to quaternary structure, monomer.

It localises to the cytoplasm. It catalyses the reaction tRNA(Arg) + L-arginine + ATP = L-arginyl-tRNA(Arg) + AMP + diphosphate. This is Arginine--tRNA ligase from Acidovorax ebreus (strain TPSY) (Diaphorobacter sp. (strain TPSY)).